A 504-amino-acid polypeptide reads, in one-letter code: Maturase K (504 aa).

Belongs to the intron maturase 2 family. MatK subfamily.

The protein localises to the plastid. Its subcellular location is the chloroplast. In terms of biological role, usually encoded in the trnK tRNA gene intron. Probably assists in splicing its own and other chloroplast group II introns. This chain is Maturase K, found in Vigna mungo (Black gram).